We begin with the raw amino-acid sequence, 538 residues long: Natural resistance-associated macrophage protein 1 (538 aa).

A disordered region spans residues 1–36 (MTGDTDPPKQSRTQYGSISSSPSPGPPQVPPGGTYL). The Cytoplasmic portion of the chain corresponds to 1-54 (MTGDTDPPKQSRTQYGSISSSPSPGPPQVPPGGTYLSEKIPIPNAEPGTFSLRK). A helical transmembrane segment spans residues 55 to 75 (LWAFTGPGFLMSIAYLDPGNI). Residues 76 to 81 (QSDLQA) are Extracellular-facing. Residues 82–102 (GAVAGFKLLWVLLWATVLGLL) form a helical membrane-spanning segment. At 103–139 (CQRLAARLGVVTGKDLGEICHLYYPKVPRTLLWLNME) the chain is on the cytoplasmic side. A helical membrane pass occupies residues 140 to 160 (LAIVGSDMQEVIGTAIAFNLL). Residues 161–164 (SAGR) lie on the Extracellular side of the membrane. Residues 165–185 (IPLWGGVLITVVDTFFFLYLN) form a helical membrane-spanning segment. Residues 186–193 (NYGLRKLE) are Cytoplasmic-facing. Residues 194 to 214 (AFFAFLIAIMAFTFGYEYVVA) form a helical membrane-spanning segment. Residues 215–240 (RPAQGALLRGLFLPSCSGCGQPELLQ) lie on the Extracellular side of the membrane. Residues 241–261 (AVGIVGAIIMPHNIYLHSALV) form a helical membrane-spanning segment. Residues 262–286 (KSREVDRTRREDIREANMYFLIEST) lie on the Cytoplasmic side of the membrane. A helical transmembrane segment spans residues 287–307 (IALFVSFFINLFVMAVFGQAF). Residues 308-346 (YQQTNQAAFNICANSSLHDYAKIFPRNNLTVAVDFYQGG) are Extracellular-facing. 2 N-linked (GlcNAc...) asparagine glycosylation sites follow: Asn-321 and Asn-335. Residues 347–367 (VILGCLFGPAALYIWAVGLLA) traverse the membrane as a helical segment. At 368–394 (AGQSSTMTGTYAGQFVMEGFLKLRWSR) the chain is on the cytoplasmic side. The chain crosses the membrane as a helical span at residues 395–415 (FARLLLTRSCAILPALLVAVF). Residues 416 to 432 (KELQDLSSLNDLLNVLQ) lie on the Extracellular side of the membrane. A helical membrane pass occupies residues 433–453 (SLLLPFAVLPILTFTSMPALM). The Cytoplasmic segment spans residues 454–468 (QEFASGRVNKVITSS). The chain crosses the membrane as a helical span at residues 469-489 (IMLLVCAINFYFLVSYLPSLP). Residues 490 to 492 (HPA) lie on the Extracellular side of the membrane. The chain crosses the membrane as a helical span at residues 493–513 (YFGLVALLAVIYLGLTTYLVW). Topologically, residues 514–538 (TCLIAHGATLLVHSSHQHFLYGLLE) are cytoplasmic.

It belongs to the NRAMP family.

It is found in the late endosome membrane. Its subcellular location is the lysosome membrane. The catalysed reaction is Zn(2+)(in) + H(+)(out) = Zn(2+)(out) + H(+)(in). The enzyme catalyses Fe(2+)(in) + H(+)(out) = Fe(2+)(out) + H(+)(in). It catalyses the reaction Mn(2+)(in) + H(+)(out) = Mn(2+)(out) + H(+)(in). Its function is as follows. Macrophage-specific antiporter that fluxes metal ions in either direction against a proton gradient. Localized to late endosomal lysosomal membranes, delivers bivalent cations from the cytosol into these acidic compartments where they may directly affect antimicrobial activity. Involved in iron metabolism and host natural resistance to infection with intracellular parasites. Pathogen resistance involves sequestration of Fe(2+) and Mn(2+), cofactors of both prokaryotic and eukaryotic catalases and superoxide dismutases, not only to protect the macrophage against its own generation of reactive oxygen species, but to deny the cations to the pathogen for synthesis of its protective enzymes. The protein is Natural resistance-associated macrophage protein 1 (SLC11A1) of Sus scrofa (Pig).